Reading from the N-terminus, the 1412-residue chain is DNA-directed RNA polymerase subunit beta (1412 aa).

The protein belongs to the RNA polymerase beta chain family. In terms of assembly, the RNAP catalytic core consists of 2 alpha, 1 beta, 1 beta' and 1 omega subunit. When a sigma factor is associated with the core the holoenzyme is formed, which can initiate transcription.

It carries out the reaction RNA(n) + a ribonucleoside 5'-triphosphate = RNA(n+1) + diphosphate. Its function is as follows. DNA-dependent RNA polymerase catalyzes the transcription of DNA into RNA using the four ribonucleoside triphosphates as substrates. This Bdellovibrio bacteriovorus (strain ATCC 15356 / DSM 50701 / NCIMB 9529 / HD100) protein is DNA-directed RNA polymerase subunit beta.